The chain runs to 215 residues: Large ribosomal subunit protein bL25 (215 aa).

The span at 192 to 203 (EEATEEEEEAAE) shows a compositional bias: acidic residues. Residues 192 to 215 (EEATEEEEEAAEPEVIKRKEEEEE) form a disordered region. Over residues 205 to 215 (EVIKRKEEEEE) the composition is skewed to basic and acidic residues.

It belongs to the bacterial ribosomal protein bL25 family. CTC subfamily. As to quaternary structure, part of the 50S ribosomal subunit; part of the 5S rRNA/L5/L18/L25 subcomplex. Contacts the 5S rRNA. Binds to the 5S rRNA independently of L5 and L18.

In terms of biological role, this is one of the proteins that binds to the 5S RNA in the ribosome where it forms part of the central protuberance. The sequence is that of Large ribosomal subunit protein bL25 from Thermotoga sp. (strain RQ2).